The chain runs to 296 residues: tRNA dimethylallyltransferase (296 aa).

10–17 (GPTASGKT) serves as a coordination point for ATP. 12-17 (TASGKT) is a binding site for substrate. The segment at 35–38 (DSRQ) is interaction with substrate tRNA.

It belongs to the IPP transferase family. As to quaternary structure, monomer. It depends on Mg(2+) as a cofactor.

The enzyme catalyses adenosine(37) in tRNA + dimethylallyl diphosphate = N(6)-dimethylallyladenosine(37) in tRNA + diphosphate. Its function is as follows. Catalyzes the transfer of a dimethylallyl group onto the adenine at position 37 in tRNAs that read codons beginning with uridine, leading to the formation of N6-(dimethylallyl)adenosine (i(6)A). This Synechococcus sp. (strain RCC307) protein is tRNA dimethylallyltransferase.